Reading from the N-terminus, the 336-residue chain is Dihydroorotate dehydrogenase (quinone) (336 aa).

FMN is bound by residues 62-66 (AGLDK) and threonine 86. Lysine 66 contacts substrate. 111-115 (NRMGF) is a binding site for substrate. FMN-binding residues include asparagine 139 and asparagine 172. Asparagine 172 lines the substrate pocket. Serine 175 functions as the Nucleophile in the catalytic mechanism. Residue asparagine 177 coordinates substrate. Residues lysine 217 and threonine 245 each contribute to the FMN site. 246-247 (NT) lines the substrate pocket. Residues glycine 268, glycine 297, and 318–319 (YS) each bind FMN.

The protein belongs to the dihydroorotate dehydrogenase family. Type 2 subfamily. Monomer. FMN is required as a cofactor.

It localises to the cell membrane. It catalyses the reaction (S)-dihydroorotate + a quinone = orotate + a quinol. It participates in pyrimidine metabolism; UMP biosynthesis via de novo pathway; orotate from (S)-dihydroorotate (quinone route): step 1/1. Functionally, catalyzes the conversion of dihydroorotate to orotate with quinone as electron acceptor. This is Dihydroorotate dehydrogenase (quinone) from Aliivibrio fischeri (strain ATCC 700601 / ES114) (Vibrio fischeri).